Reading from the N-terminus, the 125-residue chain is Glycine cleavage system H protein (125 aa).

The region spanning 23-105 (VSTVGITEHA…FEGGWLFKVR (83 aa)) is the Lipoyl-binding domain. N6-lipoyllysine is present on Lys-64.

This sequence belongs to the GcvH family. As to quaternary structure, the glycine cleavage system is composed of four proteins: P, T, L and H. (R)-lipoate is required as a cofactor.

The glycine cleavage system catalyzes the degradation of glycine. The H protein shuttles the methylamine group of glycine from the P protein to the T protein. The sequence is that of Glycine cleavage system H protein from Streptomyces coelicolor (strain ATCC BAA-471 / A3(2) / M145).